Reading from the N-terminus, the 997-residue chain is Protein argonaute 5 (997 aa).

Composition is skewed to gly residues over residues 1-16 (MSNR…SRGR) and 43-59 (GGRG…GNVG). Residues 1 to 144 (MSNRGGGGHG…TSLPPASSKA (144 aa)) form a disordered region. A compositionally biased stretch (low complexity) spans 93-106 (SVASSSKTVSVASS). Polar residues predominate over residues 116–129 (VSETMSNLQITSTE). In terms of domain architecture, PAZ spans 360 to 471 (VVTDFISKFL…LPMELCQIDE (112 aa)). One can recognise a Piwi domain in the interval 638–958 (LLIVILPDVT…AAFRARYYME (321 aa)). Residues aspartate 721 and aspartate 807 each coordinate a divalent metal cation. 3 interaction with guide RNA regions span residues 847 to 848 (KR), 893 to 901 (HAGIQGTSR), and 930 to 952 (YARC…AAFR). Residue histidine 947 coordinates a divalent metal cation.

The protein belongs to the argonaute family. Ago subfamily. It depends on Mg(2+) as a cofactor. The cofactor is Mn(2+).

Functionally, involved in RNA-mediated post-transcriptional gene silencing (PTGS). Main component of the RNA-induced silencing complex (RISC) that binds to a short guide RNA such as a microRNA (miRNA) or small interfering RNA (siRNA). RISC uses the mature miRNA or siRNA as a guide for slicer-directed cleavage of homologous mRNAs to repress gene expression. Associates with siRNAs of various sizes, from 21-24 nucleotide in length and preferentially recruits small RNAs with a 5' terminal cytosine. Probably involved in antiviral RNA silencing. Associates with siRNAs derived from cucumber mosaic virus (CMV). Targeted by the turnip yellows virus (TuYV) protein P0 (via F-box-like domain) for probable proteasome degradation and thereby inactivating AGO5 function in RNA silencing. In Arabidopsis thaliana (Mouse-ear cress), this protein is Protein argonaute 5 (AGO5).